The primary structure comprises 617 residues: Kelch-like protein diablo (617 aa).

The tract at residues 1–55 is disordered; sequence MGDPLLPGSTGLGSGGTAAATGGTGTTGTGLGSGGTSGTERPPSPARLTHTSEKH. Over residues 10-37 the composition is skewed to gly residues; the sequence is TGLGSGGTAAATGGTGTTGTGLGSGGTS. The BTB domain maps to 73 to 140; the sequence is CDVVLNVGGR…CYTAHIIVEE (68 aa). A BACK domain is found at 175-277; sequence CLGIRAFADT…SPKFLVGTVG (103 aa). Kelch repeat units follow at residues 324–370, 372–418, 419–465, 467–512, 514–559, and 560–606; these read VLFA…VLND, LYAV…VLDG, FLYA…VLSG, LYAI…VFNN, IYAV…VVNG, and QLYA…VMRA.

It functions in the pathway protein modification; protein ubiquitination. In terms of biological role, probable substrate-specific adapter of an E3 ubiquitin-protein ligase complex which mediates the ubiquitination and subsequent proteasomal degradation of target proteins. May have a role in synapse differentiation and growth. The sequence is that of Kelch-like protein diablo from Drosophila mojavensis (Fruit fly).